Consider the following 655-residue polypeptide: Fructose-1,6-bisphosphatase class 3 (655 aa).

This sequence belongs to the FBPase class 3 family. Mn(2+) is required as a cofactor.

It catalyses the reaction beta-D-fructose 1,6-bisphosphate + H2O = beta-D-fructose 6-phosphate + phosphate. It functions in the pathway carbohydrate biosynthesis; gluconeogenesis. The chain is Fructose-1,6-bisphosphatase class 3 from Porphyromonas gingivalis (strain ATCC 33277 / DSM 20709 / CIP 103683 / JCM 12257 / NCTC 11834 / 2561).